Reading from the N-terminus, the 98-residue chain is UPF0213 protein in ldhD 5'region (98 aa).

Positions 7 to 84 constitute a GIY-YIG domain; that stretch reads NGFYFYVLWC…KKQSRKEKLK (78 aa).

This sequence belongs to the UPF0213 family.

The sequence is that of UPF0213 protein in ldhD 5'region from Pediococcus acidilactici.